The following is a 220-amino-acid chain: ATP phosphoribosyltransferase (220 aa).

It belongs to the ATP phosphoribosyltransferase family. Short subfamily. Heteromultimer composed of HisG and HisZ subunits.

The protein localises to the cytoplasm. It carries out the reaction 1-(5-phospho-beta-D-ribosyl)-ATP + diphosphate = 5-phospho-alpha-D-ribose 1-diphosphate + ATP. It functions in the pathway amino-acid biosynthesis; L-histidine biosynthesis; L-histidine from 5-phospho-alpha-D-ribose 1-diphosphate: step 1/9. Its function is as follows. Catalyzes the condensation of ATP and 5-phosphoribose 1-diphosphate to form N'-(5'-phosphoribosyl)-ATP (PR-ATP). Has a crucial role in the pathway because the rate of histidine biosynthesis seems to be controlled primarily by regulation of HisG enzymatic activity. This chain is ATP phosphoribosyltransferase, found in Prochlorococcus marinus (strain NATL1A).